Consider the following 143-residue polypeptide: Transcriptional regulator MraZ (143 aa).

SpoVT-AbrB domains follow at residues 5–47 and 76–119; these read EFDH…TLEE and AVEV…DRET.

Belongs to the MraZ family. Forms oligomers.

Its subcellular location is the cytoplasm. The protein resides in the nucleoid. The protein is Transcriptional regulator MraZ of Staphylococcus epidermidis (strain ATCC 35984 / DSM 28319 / BCRC 17069 / CCUG 31568 / BM 3577 / RP62A).